Consider the following 887-residue polypeptide: DNA gyrase subunit A (887 aa).

Residues 35–501 (LPDVRDGLKP…GFENLEDEDL (467 aa)) form the Topo IIA-type catalytic domain. Residue tyrosine 123 is the O-(5'-phospho-DNA)-tyrosine intermediate of the active site. The GyrA-box signature appears at 528-534 (QNRGGRG). The tract at residues 811 to 864 (KEDAEDETNEDEQSTSTVSEDGTEQQREAVVNDETPGNAIHTEVIDSEENDEDG) is disordered. Over residues 813–823 (DAEDETNEDEQ) the composition is skewed to acidic residues.

It belongs to the type II topoisomerase GyrA/ParC subunit family. In terms of assembly, heterotetramer, composed of two GyrA and two GyrB chains. In the heterotetramer, GyrA contains the active site tyrosine that forms a transient covalent intermediate with DNA, while GyrB binds cofactors and catalyzes ATP hydrolysis.

It is found in the cytoplasm. It catalyses the reaction ATP-dependent breakage, passage and rejoining of double-stranded DNA.. In terms of biological role, a type II topoisomerase that negatively supercoils closed circular double-stranded (ds) DNA in an ATP-dependent manner to modulate DNA topology and maintain chromosomes in an underwound state. Negative supercoiling favors strand separation, and DNA replication, transcription, recombination and repair, all of which involve strand separation. Also able to catalyze the interconversion of other topological isomers of dsDNA rings, including catenanes and knotted rings. Type II topoisomerases break and join 2 DNA strands simultaneously in an ATP-dependent manner. This is DNA gyrase subunit A from Staphylococcus aureus (strain COL).